A 340-amino-acid polypeptide reads, in one-letter code: Holliday junction branch migration complex subunit RuvB (340 aa).

The large ATPase domain (RuvB-L) stretch occupies residues 1-183; the sequence is MKRDDLVSPE…FGISFRLDYY (183 aa). ATP contacts are provided by residues leucine 22, arginine 23, glycine 64, lysine 67, threonine 68, threonine 69, 130–132, arginine 173, tyrosine 183, and arginine 220; that span reads EDF. Threonine 68 is a Mg(2+) binding site. The segment at 184–254 is small ATPAse domain (RuvB-S); it reads AVEELTKIIN…VAVHALEMLE (71 aa). Residues 257–340 form a head domain (RuvB-H) region; it reads DRGFDQMDRS…KFEVGQKELF (84 aa). Positions 312 and 317 each coordinate DNA.

It belongs to the RuvB family. In terms of assembly, homohexamer. Forms an RuvA(8)-RuvB(12)-Holliday junction (HJ) complex. HJ DNA is sandwiched between 2 RuvA tetramers; dsDNA enters through RuvA and exits via RuvB. An RuvB hexamer assembles on each DNA strand where it exits the tetramer. Each RuvB hexamer is contacted by two RuvA subunits (via domain III) on 2 adjacent RuvB subunits; this complex drives branch migration. In the full resolvosome a probable DNA-RuvA(4)-RuvB(12)-RuvC(2) complex forms which resolves the HJ.

It localises to the cytoplasm. It carries out the reaction ATP + H2O = ADP + phosphate + H(+). The RuvA-RuvB-RuvC complex processes Holliday junction (HJ) DNA during genetic recombination and DNA repair, while the RuvA-RuvB complex plays an important role in the rescue of blocked DNA replication forks via replication fork reversal (RFR). RuvA specifically binds to HJ cruciform DNA, conferring on it an open structure. The RuvB hexamer acts as an ATP-dependent pump, pulling dsDNA into and through the RuvAB complex. RuvB forms 2 homohexamers on either side of HJ DNA bound by 1 or 2 RuvA tetramers; 4 subunits per hexamer contact DNA at a time. Coordinated motions by a converter formed by DNA-disengaged RuvB subunits stimulates ATP hydrolysis and nucleotide exchange. Immobilization of the converter enables RuvB to convert the ATP-contained energy into a lever motion, pulling 2 nucleotides of DNA out of the RuvA tetramer per ATP hydrolyzed, thus driving DNA branch migration. The RuvB motors rotate together with the DNA substrate, which together with the progressing nucleotide cycle form the mechanistic basis for DNA recombination by continuous HJ branch migration. Branch migration allows RuvC to scan DNA until it finds its consensus sequence, where it cleaves and resolves cruciform DNA. In Syntrophus aciditrophicus (strain SB), this protein is Holliday junction branch migration complex subunit RuvB.